We begin with the raw amino-acid sequence, 298 residues long: HTH-type transcriptional regulator TsaR (298 aa).

Positions 1–58 (MKLQTLQALICIEEVGSLRAAAQLLHLSQPALSAAIQQLEDELKAPLLVRTKRGVSLT) constitute an HTH lysR-type domain. Residues 18 to 37 (LRAAAQLLHLSQPALSAAIQ) constitute a DNA-binding region (H-T-H motif). Residues S98 and A100 each contribute to the toluene-4-sulfonate site.

This sequence belongs to the LysR transcriptional regulatory family. As to quaternary structure, homotetramer. Dimer of dimers related by a twofold axis.

With respect to regulation, sensitive to oxygen. In terms of biological role, regulates expression of the tsaMBCD1 operon and of tsaT in response to p-toluenesulfonate (TSA). Acts by binding directly to the promoter region. Binding to the tsa promoter depends on TSA concentration. The protein is HTH-type transcriptional regulator TsaR (tsaR) of Comamonas testosteroni (Pseudomonas testosteroni).